A 219-amino-acid polypeptide reads, in one-letter code: ATP synthase F(0) complex subunit a (219 aa).

Helical transmembrane passes span 4-24, 61-81, 90-110, 124-144, 172-192, and 194-214; these read PTYLGIPLIAVALTLPWILFP, WAALLTSLMLFLITLNMLGLL, QLSLNMGLAVPLWLATVIIGM, EGTPVPLIPVLIIIETISLFI, FVLLPLMPTVAILTSIVLFLL, and LLEIAVAMIQAYVFVLLLSLY.

Belongs to the ATPase A chain family. As to quaternary structure, component of the ATP synthase complex composed at least of ATP5F1A/subunit alpha, ATP5F1B/subunit beta, ATP5MC1/subunit c (homooctomer), MT-ATP6/subunit a, MT-ATP8/subunit 8, ATP5ME/subunit e, ATP5MF/subunit f, ATP5MG/subunit g, ATP5MK/subunit k, ATP5MJ/subunit j, ATP5F1C/subunit gamma, ATP5F1D/subunit delta, ATP5F1E/subunit epsilon, ATP5PF/subunit F6, ATP5PB/subunit b, ATP5PD/subunit d, ATP5PO/subunit OSCP. ATP synthase complex consists of a soluble F(1) head domain (subunits alpha(3) and beta(3)) - the catalytic core - and a membrane F(0) domain - the membrane proton channel (subunits c, a, 8, e, f, g, k and j). These two domains are linked by a central stalk (subunits gamma, delta, and epsilon) rotating inside the F1 region and a stationary peripheral stalk (subunits F6, b, d, and OSCP). Interacts with DNAJC30; interaction is direct.

The protein localises to the mitochondrion inner membrane. It catalyses the reaction H(+)(in) = H(+)(out). In terms of biological role, subunit a, of the mitochondrial membrane ATP synthase complex (F(1)F(0) ATP synthase or Complex V) that produces ATP from ADP in the presence of a proton gradient across the membrane which is generated by electron transport complexes of the respiratory chain. ATP synthase complex consist of a soluble F(1) head domain - the catalytic core - and a membrane F(1) domain - the membrane proton channel. These two domains are linked by a central stalk rotating inside the F(1) region and a stationary peripheral stalk. During catalysis, ATP synthesis in the catalytic domain of F(1) is coupled via a rotary mechanism of the central stalk subunits to proton translocation. With the subunit c (ATP5MC1), forms the proton-conducting channel in the F(0) domain, that contains two crucial half-channels (inlet and outlet) that facilitate proton movement from the mitochondrial intermembrane space (IMS) into the matrix. Protons are taken up via the inlet half-channel and released through the outlet half-channel, following a Grotthuss mechanism. This is ATP synthase F(0) complex subunit a from Oncorhynchus masou (Cherry salmon).